We begin with the raw amino-acid sequence, 486 residues long: Cardiolipin synthase A (486 aa).

The next 2 helical transmembrane spans lie at 3–23 (TFYTVVSWLVILGYWVLIAGV) and 38–58 (MAWLLIIYILPMVGIIAYLSV). 2 consecutive PLD phosphodiesterase domains span residues 219–246 (MDLRQHRKMVMIDNYIAYTGSMNMVDPR) and 399–426 (EGGLLHTKSVLVDGELSLVGTVNLDMRS). Catalysis depends on residues His-224, Lys-226, Asp-231, His-404, Lys-406, and Asp-411.

Belongs to the phospholipase D family. Cardiolipin synthase subfamily. ClsA sub-subfamily.

The protein resides in the cell inner membrane. The catalysed reaction is 2 a 1,2-diacyl-sn-glycero-3-phospho-(1'-sn-glycerol) = a cardiolipin + glycerol. In terms of biological role, catalyzes the reversible phosphatidyl group transfer from one phosphatidylglycerol molecule to another to form cardiolipin (CL) (diphosphatidylglycerol) and glycerol. The protein is Cardiolipin synthase A of Salmonella gallinarum (strain 287/91 / NCTC 13346).